Consider the following 388-residue polypeptide: S-adenosylmethionine synthase (388 aa).

H16 provides a ligand contact to ATP. D18 is a binding site for Mg(2+). E44 serves as a coordination point for K(+). L-methionine contacts are provided by E57 and Q100. Residues 100 to 110 (QSPEIAQGVDR) are flexible loop. Residues 165 to 167 (DAK), D240, 246 to 247 (RK), A263, and K267 contribute to the ATP site. D240 provides a ligand contact to L-methionine. K271 provides a ligand contact to L-methionine.

The protein belongs to the AdoMet synthase family. Homotetramer; dimer of dimers. Mg(2+) serves as cofactor. The cofactor is K(+).

It is found in the cytoplasm. The enzyme catalyses L-methionine + ATP + H2O = S-adenosyl-L-methionine + phosphate + diphosphate. Its pathway is amino-acid biosynthesis; S-adenosyl-L-methionine biosynthesis; S-adenosyl-L-methionine from L-methionine: step 1/1. In terms of biological role, catalyzes the formation of S-adenosylmethionine (AdoMet) from methionine and ATP. The overall synthetic reaction is composed of two sequential steps, AdoMet formation and the subsequent tripolyphosphate hydrolysis which occurs prior to release of AdoMet from the enzyme. This Acinetobacter baylyi (strain ATCC 33305 / BD413 / ADP1) protein is S-adenosylmethionine synthase.